We begin with the raw amino-acid sequence, 451 residues long: Glyceraldehyde-3-phosphate dehydrogenase B, chloroplastic (451 aa).

The segment at 1–25 (MATHAALASTRIPTNTRFPSKTSHS) is disordered. The N-terminal 84 residues, 1–84 (MATHAALAST…STAVKGVTVA (84 aa)), are a transit peptide targeting the chloroplast. Over residues 11 to 25 (RIPTNTRFPSKTSHS) the composition is skewed to polar residues. NADP(+) contacts are provided by residues 95-96 (RI), D119, and R164. Residues 238 to 240 (SCT), T269, R284, 297 to 298 (TG), and R320 contribute to the D-glyceraldehyde 3-phosphate site. C239 serves as the catalytic Nucleophile. N403 provides a ligand contact to NADP(+).

The protein belongs to the glyceraldehyde-3-phosphate dehydrogenase family. Tetramer of either four A chains (GAPDH 2) or two A and two B chains (GAPDH 1).

Its subcellular location is the plastid. The protein resides in the chloroplast. It catalyses the reaction D-glyceraldehyde 3-phosphate + phosphate + NADP(+) = (2R)-3-phospho-glyceroyl phosphate + NADPH + H(+). It participates in carbohydrate biosynthesis; Calvin cycle. The polypeptide is Glyceraldehyde-3-phosphate dehydrogenase B, chloroplastic (GAPB) (Pisum sativum (Garden pea)).